The sequence spans 407 residues: MNVAQIKKVVLAFSGGLDTSVILKWLQDTYRCEVVTFTADIGQGEEVEPARAKAKQLGVREIFIDDLREEFVRDFVFPMFRANTLYEGEYLLGTSIARPLIAKRQIEIARETGADAVSHGATGKGNDQVRFELGYYALQPDIRVIAPWREWDLTSREKLLKYAEQHGIPVEMKKKEGSPYSMDANLLHISYEGRILEDPAQEPEESMWRWSVSPEKAPDSPEYLDLEFRQGDIVALDGEELSPARLLARLNELGGKHGIGRLDLVENRYVGMKSRGCYETPGGTIMLRAHRAMESITLDREVAHLKDELMPRYAELIYNGYWWSPERRMMQTMIDASQAHVNGWVRVKLYKGNVIVVGRDSKTDSLFDPHIATFEDDQGAYNQMDAAGFIKLNALRMRIAANLRNRK.

Residues A12–S20 and A39 each bind ATP. L-citrulline contacts are provided by Y90 and S95. G120 provides a ligand contact to ATP. Residues T122, N126, and D127 each coordinate L-aspartate. Position 126 (N126) interacts with L-citrulline. Positions 130, 181, 190, 266, and 278 each coordinate L-citrulline.

This sequence belongs to the argininosuccinate synthase family. Type 1 subfamily. In terms of assembly, homotetramer.

Its subcellular location is the cytoplasm. The catalysed reaction is L-citrulline + L-aspartate + ATP = 2-(N(omega)-L-arginino)succinate + AMP + diphosphate + H(+). It functions in the pathway amino-acid biosynthesis; L-arginine biosynthesis; L-arginine from L-ornithine and carbamoyl phosphate: step 2/3. The sequence is that of Argininosuccinate synthase from Nitrosospira multiformis (strain ATCC 25196 / NCIMB 11849 / C 71).